Here is a 1681-residue protein sequence, read N- to C-terminus: Sodium channel protein type 7 subunit alpha (1681 aa).

The Cytoplasmic portion of the chain corresponds to 1–118 (MLTSPEPKGL…RRAAIKALVH (118 aa)). An I repeat occupies 101–402 (TLSPLNSLRR…ILTMTYEKEK (302 aa)). The helical transmembrane segment at 119 to 138 (PLFRLLILISVLTDSILMCM) threads the bilayer. At 139–142 (SNLP) the chain is on the extracellular side. A helical membrane pass occupies residues 143–168 (EWILAIENTLLGIYAFEILVKVIARG). At 169 to 179 (IWAGSFSFLGD) the chain is on the cytoplasmic side. A helical transmembrane segment spans residues 180 to 197 (LWNWLDFSVTLFELITRF). Residues 198-201 (SPLS) lie on the Extracellular side of the membrane. A helical transmembrane segment spans residues 202 to 220 (SFLMLKTIRTFRILKIIPL). The Cytoplasmic segment spans residues 221 to 238 (NHGLQSIVMTLAQCLKKL). The helical transmembrane segment at 239–260 (FGAIALALFFLAVFSLLGMGLF) threads the bilayer. Residues 261–339 (MGNLKHKCLR…PDNGFTSFDN (79 aa)) are Extracellular-facing. A disulfide bridge connects residues cysteine 268 and cysteine 308. N-linked (GlcNAc...) asparagine glycosylation is found at asparagine 277, asparagine 282, asparagine 288, and asparagine 310. Positions 340-367 (FGWSLLAMFRLMTQDYPELLYHQILYAS) form an intramembrane region, pore-forming. Glycine 368 is a topological domain (extracellular). Residues 369-408 (KVYMIFFVMISFWFAFYLTSLFLGILTMTYEKEKQRACEE) form a helical membrane-spanning segment. The Cytoplasmic segment spans residues 409–506 (SGGLDPKCQQ…EFADRVITHP (98 aa)). Residues 488–757 (CSPCWVKLNE…QLAMARIKSG (270 aa)) form an II repeat. Residues 507-522 (LADLFLVICIVLNICF) traverse the membrane as a helical segment. Over 523-531 (LALEHFPMS) the chain is Extracellular. Residues 532-560 (EELRSLLHVGNLVFIGIYTIEMILKIIAM) form a helical membrane-spanning segment. At 561 to 569 (HPYGYFQIS) the chain is on the cytoplasmic side. The chain crosses the membrane as a helical span at residues 570–587 (WNIFDSILVVLELTEILL). Residues 588–593 (ADVEGL) are Extracellular-facing. The chain crosses the membrane as a helical span at residues 594-609 (AVLITVPLIFIKLGKY). Residues 610–626 (GPPFKSLMRILGSSLMA) lie on the Cytoplasmic side of the membrane. The chain crosses the membrane as a helical span at residues 627 to 655 (LKDLVLLLCIFVYFSAVFGMKLFGRSYKD). The Extracellular segment spans residues 656–673 (CVCHIKEDCQPQRWHMSD). 2 cysteine pairs are disulfide-bonded: cysteine 658-cysteine 664 and cysteine 696-cysteine 705. The segment at residues 674–700 (FLHAYMTVFRILCGEWIETLWECMEVA) is an intramembrane region (pore-forming). Position 701 (glycine 701) is a topological domain, extracellular. Residues 702–732 (QAWCIPFYMMVILIGNLLILYLFVTLVSSFS) form a helical membrane-spanning segment. Residues 733–934 (YYDATSEVNK…KTCCKIVENS (202 aa)) are Cytoplasmic-facing. Positions 806–834 (YKDQSSSTEKTPVTESESQSLIASPSASE) are enriched in polar residues. A disordered region spans residues 806 to 875 (YKDQSSSTEK…MKQSSSSECS (70 aa)). Phosphoserine is present on serine 843. Residues 916-1224 (NGKIWKNIRK…KKQYRALKKL (309 aa)) form an III repeat. The helical transmembrane segment at 935–953 (WFECFIGLVTLLCTGTLAL) threads the bilayer. The Extracellular portion of the chain corresponds to 954–961 (EDIYIDQR). A helical membrane pass occupies residues 962–990 (KTTKILLEYADMIFAYIFILEMLLKWVAY). Residues 991 to 998 (GFKAFFSN) lie on the Cytoplasmic side of the membrane. A helical transmembrane segment spans residues 999–1020 (NWYKLDFMVVIVFCLSLIGKTR). A topological domain (extracellular) is located at residue glutamate 1021. Residues 1022–1040 (DLNPLTSIKFLRALRVLSQ) traverse the membrane as a helical segment. Topologically, residues 1041–1055 (FERMKVVLRALIKTT) are cytoplasmic. The chain crosses the membrane as a helical span at residues 1056–1080 (LPTVSVFLVCLMIWLLFSVIGVQLF). At 1081–1127 (AGKFYECIDPTKGERFPVFEVMNKSQCEKLLFNESMPWENAKLNFDN) the chain is on the extracellular side. Residues cysteine 1087 and cysteine 1107 are joined by a disulfide bond. N-linked (GlcNAc...) asparagine glycosylation is found at asparagine 1103 and asparagine 1113. Positions 1128–1154 (VGNGFLSLLQVATFNGWISIMNSAIDS) form an intramembrane region, pore-forming. Over 1155-1167 (VGVNMQPSFEYNL) the chain is Extracellular. The chain crosses the membrane as a helical span at residues 1168–1202 (YMYSYFIIFVIFGLFLPLCMLIGVIIRNFNKQKIK). At 1203–1250 (QGGSNIFITVKQKKQYRALKKLLYADVQKPTPRPRNKFQGFLFDLVTH) the chain is on the cytoplasmic side. One copy of the IV repeat lies at 1233 to 1531 (TPRPRNKFQG…WNRFDPDRTQ (299 aa)). The chain crosses the membrane as a helical span at residues 1251–1272 (RVFNVIIILLICFQATTIMIQK). Residues 1273–1276 (DEQS) lie on the Extracellular side of the membrane. A helical membrane pass occupies residues 1277-1305 (PQMETAIFWMNSIFVMLFTLECILKLTAF). The Cytoplasmic segment spans residues 1306 to 1312 (RCHYFTS). The chain crosses the membrane as a helical span at residues 1313–1338 (AWNVHDFMVVIFSITGLLLPLTIGQY). Over 1339–1341 (FVP) the chain is Extracellular. Residues 1342-1362 (PSLVQLILLSRVIHILRPGKG) traverse the membrane as a helical segment. Over 1363-1377 (PKVFHDLMLPLILAL) the chain is Cytoplasmic. The helical transmembrane segment at 1378–1402 (PALLNISLLIFLVMFIYAIFGMYNF) threads the bilayer. The Extracellular segment spans residues 1403-1420 (AYVKKEAGINDVSNFETF). The segment at residues 1421-1444 (GSSMLCLFQVTTFSGWDGMLDAIF) is an intramembrane region (pore-forming). Residues 1445 to 1468 (NSQWSDCDPDKINPGTQVKGDCGS) lie on the Extracellular side of the membrane. Cysteine 1451 and cysteine 1466 are joined by a disulfide. A helical membrane pass occupies residues 1469 to 1504 (PSVGISYFVSYILISWLIIVNMYIVLIMEFLSIPSQ). Over 1505–1681 (KKSRTLSEDD…EEKASIQTQI (177 aa)) the chain is Cytoplasmic. Residues 1647–1662 (NVSDTPAIDDRRDDLT) show a composition bias toward basic and acidic residues. The tract at residues 1647 to 1681 (NVSDTPAIDDRRDDLTSKGAHSGKIEEKASIQTQI) is disordered.

It belongs to the sodium channel (TC 1.A.1.10) family. SCN7A subfamily. As to quaternary structure, the sodium channel formed by SCN7A is probably a heterooligomeric complex consisting of the ion conducting pore forming alpha subunit SCN7A and regulatory beta subunits such as SCN3B. Interacts with ATP1A1; activates ATP1A1 and thereby indirectly signals to nearby neurons to regulate sodium homeostasis. In terms of tissue distribution, not tissue specific but widely expressed. Expressed in regions of the central nervous system that control body fluid ionic balance.

The protein localises to the cell membrane. It catalyses the reaction Na(+)(in) = Na(+)(out). Its function is as follows. Sodium leak channel functioning as an osmosensor regulating sodium ion levels in various tissues and organs. While most sodium channels are voltage-gated, SCN7A is not and lets sodium flow through membrane along its concentration gradient. In glial cells of the central nervous system, senses body-fluid sodium levels and controls salt intake behavior as well as voluntary water intake through activation of nearby neurons to maintain appropriate sodium levels in the body. By mediating sodium influx into keratinocytes, also plays a role in skin barrier homeostasis. This chain is Sodium channel protein type 7 subunit alpha, found in Mus musculus (Mouse).